We begin with the raw amino-acid sequence, 585 residues long: Arginine--tRNA ligase (585 aa).

A 'HIGH' region motif is present at residues 126-136; it reads PNIAKEMHVGH.

It belongs to the class-I aminoacyl-tRNA synthetase family. In terms of assembly, monomer.

Its subcellular location is the cytoplasm. The catalysed reaction is tRNA(Arg) + L-arginine + ATP = L-arginyl-tRNA(Arg) + AMP + diphosphate. The polypeptide is Arginine--tRNA ligase (Trichodesmium erythraeum (strain IMS101)).